Reading from the N-terminus, the 182-residue chain is uncharacterized protein (182 aa).

The 129-residue stretch at L36–L164 folds into the Nudix hydrolase domain. The Nudix box motif lies at G73–G95. Positions 89 and 93 each coordinate Mg(2+).

This sequence belongs to the Nudix hydrolase family. The cofactor is Mg(2+).

This is an uncharacterized protein from Yersinia pestis.